The sequence spans 72 residues: Large ribosomal subunit protein uL29 (72 aa).

Belongs to the universal ribosomal protein uL29 family.

This is Large ribosomal subunit protein uL29 from Thermodesulfovibrio yellowstonii (strain ATCC 51303 / DSM 11347 / YP87).